Consider the following 126-residue polypeptide: Glycine cleavage system H protein (126 aa).

The Lipoyl-binding domain occupies 23 to 104 (KVRVGITDFA…YDEGWMIEII (82 aa)). N6-lipoyllysine is present on Lys64.

It belongs to the GcvH family. The glycine cleavage system is composed of four proteins: P, T, L and H. (R)-lipoate serves as cofactor.

Its function is as follows. The glycine cleavage system catalyzes the degradation of glycine. The H protein shuttles the methylamine group of glycine from the P protein to the T protein. The protein is Glycine cleavage system H protein of Chlorobium phaeobacteroides (strain BS1).